A 150-amino-acid polypeptide reads, in one-letter code: MSDGFEQKEQKPFNTGREETIMEETKQVGKGILYGLIAIFSAMLLTSLAVSLLLTATSLEESSFNWLITAISFLSLFIGGFISGGKGKERGWMIGALTALSFSLIILLFQYLGFGKTFTAEQLIFHLGFLGVCMLGGIFGVNMRGNRSST.

4 consecutive transmembrane segments (helical) span residues 32–52, 64–84, 94–114, and 123–143; these read ILYG…AVSL, FNWL…FISG, IGAL…YLGF, and LIFH…GVNM.

Its subcellular location is the cell membrane. This is an uncharacterized protein from Bacillus subtilis (strain 168).